We begin with the raw amino-acid sequence, 258 residues long: UPF0246 protein YaaA (258 aa).

It belongs to the UPF0246 family.

The chain is UPF0246 protein YaaA from Escherichia coli O45:K1 (strain S88 / ExPEC).